The following is a 345-amino-acid chain: DNA-directed RNA polymerase subunit alpha (345 aa).

The alpha N-terminal domain (alpha-NTD) stretch occupies residues methionine 1 to arginine 234. Positions leucine 266 to lysine 345 are alpha C-terminal domain (alpha-CTD).

The protein belongs to the RNA polymerase alpha chain family. In terms of assembly, in plastids the minimal PEP RNA polymerase catalytic core is composed of four subunits: alpha, beta, beta', and beta''. When a (nuclear-encoded) sigma factor is associated with the core the holoenzyme is formed, which can initiate transcription.

It is found in the plastid. The protein resides in the chloroplast. The catalysed reaction is RNA(n) + a ribonucleoside 5'-triphosphate = RNA(n+1) + diphosphate. DNA-dependent RNA polymerase catalyzes the transcription of DNA into RNA using the four ribonucleoside triphosphates as substrates. In Adiantum capillus-veneris (Maidenhair fern), this protein is DNA-directed RNA polymerase subunit alpha.